The chain runs to 345 residues: Phosphoribosylformylglycinamidine cyclo-ligase (345 aa).

It belongs to the AIR synthase family.

It localises to the cytoplasm. The enzyme catalyses 2-formamido-N(1)-(5-O-phospho-beta-D-ribosyl)acetamidine + ATP = 5-amino-1-(5-phospho-beta-D-ribosyl)imidazole + ADP + phosphate + H(+). It functions in the pathway purine metabolism; IMP biosynthesis via de novo pathway; 5-amino-1-(5-phospho-D-ribosyl)imidazole from N(2)-formyl-N(1)-(5-phospho-D-ribosyl)glycinamide: step 2/2. The polypeptide is Phosphoribosylformylglycinamidine cyclo-ligase (Methylococcus capsulatus (strain ATCC 33009 / NCIMB 11132 / Bath)).